Consider the following 240-residue polypeptide: UDP-2,3-diacylglucosamine hydrolase (240 aa).

Residues D8, H10, D41, N79, and H114 each coordinate Mn(2+). N79–R80 contributes to the substrate binding site. D122, S160, N164, K167, and H195 together coordinate substrate. Residues H195 and H197 each contribute to the Mn(2+) site.

Belongs to the LpxH family. The cofactor is Mn(2+).

It localises to the cell inner membrane. The enzyme catalyses UDP-2-N,3-O-bis[(3R)-3-hydroxytetradecanoyl]-alpha-D-glucosamine + H2O = 2-N,3-O-bis[(3R)-3-hydroxytetradecanoyl]-alpha-D-glucosaminyl 1-phosphate + UMP + 2 H(+). The protein operates within glycolipid biosynthesis; lipid IV(A) biosynthesis; lipid IV(A) from (3R)-3-hydroxytetradecanoyl-[acyl-carrier-protein] and UDP-N-acetyl-alpha-D-glucosamine: step 4/6. Its function is as follows. Hydrolyzes the pyrophosphate bond of UDP-2,3-diacylglucosamine to yield 2,3-diacylglucosamine 1-phosphate (lipid X) and UMP by catalyzing the attack of water at the alpha-P atom. Involved in the biosynthesis of lipid A, a phosphorylated glycolipid that anchors the lipopolysaccharide to the outer membrane of the cell. The polypeptide is UDP-2,3-diacylglucosamine hydrolase (Proteus mirabilis (strain HI4320)).